The following is a 135-amino-acid chain: UPF0299 membrane protein YPK_2559 (135 aa).

3 helical membrane passes run 30 to 50 (LLLPIVIPGSIIGMLILFVLL), 66 to 86 (LLIRYMALLFVPIGVGVMQYY), and 93 to 113 (FGPIVVSCFISTLIVMLVVAY).

It belongs to the UPF0299 family.

The protein localises to the cell inner membrane. This is UPF0299 membrane protein YPK_2559 from Yersinia pseudotuberculosis serotype O:3 (strain YPIII).